The chain runs to 118 residues: Ig heavy chain V region AC38 205.12 (118 aa).

Residues 1–98 (EVQLQQSGPE…EDSAVYYCAR (98 aa)) are v segment. A disulfide bridge connects residues Cys22 and Cys96. The d segment stretch occupies residues 99-104 (GYGYDP). The j segment stretch occupies residues 105 to 118 (FDVWGTGTTVTVSS).

This is Ig heavy chain V region AC38 205.12 from Mus musculus (Mouse).